Here is a 71-residue protein sequence, read N- to C-terminus: Small ribosomal subunit protein bS21 (71 aa).

The protein belongs to the bacterial ribosomal protein bS21 family.

This Acinetobacter baylyi (strain ATCC 33305 / BD413 / ADP1) protein is Small ribosomal subunit protein bS21.